Reading from the N-terminus, the 234-residue chain is LexA repressor (234 aa).

A DNA-binding region (H-T-H motif) is located at residues 26–46; the sequence is FDEMKDALDLRSKSGIHRLIT. A disordered region spans residues 80–107; sequence RGFTPSVIEGNLGKVRPPSPQHAEDDSD. Active-site for autocatalytic cleavage activity residues include Ser-155 and Lys-193.

It belongs to the peptidase S24 family. Homodimer.

It catalyses the reaction Hydrolysis of Ala-|-Gly bond in repressor LexA.. Functionally, represses a number of genes involved in the response to DNA damage (SOS response), including recA and lexA. In the presence of single-stranded DNA, RecA interacts with LexA causing an autocatalytic cleavage which disrupts the DNA-binding part of LexA, leading to derepression of the SOS regulon and eventually DNA repair. The sequence is that of LexA repressor from Rhodopseudomonas palustris (strain HaA2).